Here is a 364-residue protein sequence, read N- to C-terminus: Methylthioribose-1-phosphate isomerase (364 aa).

Substrate contacts are provided by residues 53 to 55 (RGA), Arg-90, and Gln-203. The active-site Proton donor is Asp-244. 254–255 (NK) serves as a coordination point for substrate.

It belongs to the eIF-2B alpha/beta/delta subunits family. MtnA subfamily.

The enzyme catalyses 5-(methylsulfanyl)-alpha-D-ribose 1-phosphate = 5-(methylsulfanyl)-D-ribulose 1-phosphate. Its pathway is amino-acid biosynthesis; L-methionine biosynthesis via salvage pathway; L-methionine from S-methyl-5-thio-alpha-D-ribose 1-phosphate: step 1/6. Its function is as follows. Catalyzes the interconversion of methylthioribose-1-phosphate (MTR-1-P) into methylthioribulose-1-phosphate (MTRu-1-P). This Sinorhizobium medicae (strain WSM419) (Ensifer medicae) protein is Methylthioribose-1-phosphate isomerase.